The following is a 135-amino-acid chain: Large ribosomal subunit protein uL16c (135 aa).

It belongs to the universal ribosomal protein uL16 family. As to quaternary structure, part of the 50S ribosomal subunit.

The protein resides in the plastid. Its subcellular location is the chloroplast. The protein is Large ribosomal subunit protein uL16c of Oenothera argillicola (Appalachian evening primrose).